An 835-amino-acid chain; its full sequence is MGEEHKPLLDASGVDPREEDKTATAILRRKKKDNMLLVDDAINDDNSVIAINSNTMDKLELFRGDTVLVKGKKRKDTVLIVLIDDELEDGACRINRVVRNNLRIRLGDLVTIHPCPDIKYATRISVLPIADTIEGITGNLFDVFLKPYFVEAYRPVRKGDHFVVRGGMRQVEFKVVDVEPEEYAVVAQDTIIHWEGEPINREDEENNMNEVGYDDIGGCRKQMAQIREMVELPLRHPQLFKAIGIKPPRGVLMYGPPGTGKTLMARAVANETGAFFFLINGPEVMSKMAGESESNLRKAFEEAEKNAPAIIFIDEIDSIAPKRDKTNGEVERRVVSQLLTLMDGMKARSNVVVIAATNRPNSIDPALRRFGRFDREVDIGIPDATGRLEVLRIHTKNMKLADDVDLEALAAETHGYVGADIASLCSEAAMQQIREKMDLIDLDEDEIDAEVLDSLGVTMDNFRFALGNSNPSALRETVVESVNVTWDDVGGLDEIKEELKETVEYPVLHPDQYTKFGLSPSKGVLFYGPPGTGKTLLAKAVATEVSANFISVKGPELLSMWYGESESNIRDIFDKARAAAPTVVFLDELDSIAKARGGSLGDAGGASDRVVNQLLTEMDGMNAKKNVFVIGATNRPDQIDPAILRPGRLDQLIYVPLPDENARLSILNAQLRKTPLEPGLELTAIAKATQGFSGADLLYIVQRAAKYAIKDSIEAHRQHEAEKEVKVEGEDVEMTDEGAKAEQEPEVDPVPYITKEHFAEAMKTAKRSVSDAELRRYEAYSQQMKASRGQFSNFNFNDAPLGTTATDNANSNNSAPSGAGAAFGSNAEEDDDLYS.

The segment at M1–K21 is disordered. ATP is bound at residue P257–L263. Glycyl lysine isopeptide (Lys-Gly) (interchain with G-Cter in ubiquitin) cross-links involve residues K305, K322, and K346. ATP contacts are provided by N358 and H394. Residues S472 and S519 each carry the phosphoserine modification. Residue K522 forms a Glycyl lysine isopeptide (Lys-Gly) (interchain with G-Cter in ubiquitin) linkage. G531–L536 is a binding site for ATP. Residues K539, K594, and K673 each participate in a glycyl lysine isopeptide (Lys-Gly) (interchain with G-Cter in ubiquitin) cross-link. Basic and acidic residues predominate over residues E720–G729. The segment at E720–E746 is disordered. T735 carries the post-translational modification Phosphothreonine. S770 carries the phosphoserine modification. Residues S792–S835 form a disordered region. Residues G802–N826 show a composition bias toward low complexity.

The protein belongs to the AAA ATPase family. In terms of assembly, component of the heterotrimeric CDC48-NPL4-UFD1 ATPase complex. The CDC48-NPL4-UFD1 ATPase complex interacts with the HRD1 ubiquitin ligase complex composed of the E3 ligase HRD1, its cofactors HRD3, USA1 and DER1, substrate recruiting factor YOS9 and CDC48-binding protein UBX2. Interaction between the complexes is mediated by interaction between CDC48-NPL4-UFD1 complex member CDC48 and HRD1 complex member UBX2. Forms a complex composed of CDC48, NPL4, UFD1, UFD2 and SHP1. Forms a complex composed of CDC48, NPL4, UFD1, DOA1, SHP1 and deubiquitinase OTU1; within the complex interacts with DOA1/UFD3 and OTU1 to prevent multiubiquitination of substrates. Interacts with UFD2, to add further ubiquitin moieties; the interaction with UFD2 is prevented by DOA1/UFD3. Forms a complex composed of CDC48, DOA1, deubiquitinase UBP3 and probably BRE5; within the complex interacts with DOA1 and UBP3. Interacts (via C-terminus) with DOA1 (via PUL domain); the interaction is direct. Interacts with NPL4. Interacts with SHP1/UBX1, UBX2, UBX3, UBX4, UBX5, UBX6 and UBX7. Interacts with VMS1; the interaction recruits CDC48 to the mitochondria in response to mitochondrial stress. Component of the ribosome quality control complex (RQC), composed of the E3 ubiquitin ligase RKR1/LTN1, RQC1 and RQC2, as well as CDC48 and its ubiquitin-binding cofactors. RQC forms a stable complex with 60S ribosomal subunits. Interacts with ASE1 and CDC5; the interaction is likely to result in their degradation. Component of the DSCc E3 ligase complexes composed of at least TUL1, DSC2, DSC3, UBX3, CDC48 as well as VLD1 for the vacuole-localized complex or GLD1 for the Golgi/endosome-localized complex.

The protein localises to the microsome. It is found in the endoplasmic reticulum. The protein resides in the cytoplasm. It carries out the reaction ATP + H2O = ADP + phosphate + H(+). Its activity is regulated as follows. The first ATP-binding region has low ATPase activity. The second ATP-binding region is responsible for ATPase activity. ATP binding to the first ATP-binding region induces intrinsic activity of the second ATP-binding region. While ATP binding to the first ATP-binding region appears to prevent ATP hydrolysis by the second ATP-binding region, ADP-binding to first region promotes the coordinate and cooperative ATPase cycle of the second ATP-binding region. ATP binding to the first ATP-binding region induces a conformational change, promoting the rotation of the first ATP-binding region relative to the second ATP-binding region in the hexamer. ATP-dependent chaperone which probably uses the energy provided by ATP hydrolysis to generate mechanical force to unfold substrate proteins, disassemble protein complexes, and disaggregate protein aggregates. By recruiting and promoting the degradation of ubiquitinated proteins, plays a role in the ubiquitin fusion degradation (UFD) pathway. Has a role in the endoplasmic reticulum-associated degradation (ERAD) pathway which mediates the cytoplasmic elimination of misfolded proteins exported from the ER. Required for the proteasome-dependent processing/activation of MGA2 and SPT23 transcription factors leading to the subsequent expression of OLE1. Has an additional role in the turnover of OLE1 where it targets ubiquitinated OLE1 and other proteins to the ERAD. Regulates ubiquitin-mediated mitochondria protein degradation. Involved in spindle disassembly probably by promoting the degradation of spindle assembly factors ASE1 and CDC5 at the end of mitosis. Component of the ribosome quality control complex (RQC), a ribosome-associated complex that mediates ubiquitination and extraction of incompletely synthesized nascent chains for proteasomal degradation. CDC48 may provide the mechanical force that dislodges the polyubiquitinated nascent peptides from the exit channel. Required for ribophagy, a process which relocalizes ribosomal particles into the vacuole for degradation in response to starvation. Component of the DSC E3 ubiquitin ligase complexes that tag proteins present in Golgi, endosome and vacuole membranes and function in protein homeostasis under non-stress conditions and support a role in protein quality control. Substrate initially binds through the attached polyubiquitin chain to UDF1/NPL4 and then moves through the pore of the ATPase rings and is thereby unfolded. Acts on a broad range of even well-folded proteins via ubiquitin-binding and unfolding to initiate substrate processing. Involved in degradation of mislocalized tail-anchored transmembrane proteins extracted from the mitochondrion outer membrane by MSP1 and ubiquitinated by DOA10. The chain is Cell division control protein 48 from Saccharomyces cerevisiae (strain ATCC 204508 / S288c) (Baker's yeast).